Reading from the N-terminus, the 139-residue chain is 3-hydroxyacyl-[acyl-carrier-protein] dehydratase FabZ (139 aa).

His47 is an active-site residue.

Belongs to the thioester dehydratase family. FabZ subfamily.

It is found in the cytoplasm. The catalysed reaction is a (3R)-hydroxyacyl-[ACP] = a (2E)-enoyl-[ACP] + H2O. Its function is as follows. Involved in unsaturated fatty acids biosynthesis. Catalyzes the dehydration of short chain beta-hydroxyacyl-ACPs and long chain saturated and unsaturated beta-hydroxyacyl-ACPs. In Oenococcus oeni (strain ATCC BAA-331 / PSU-1), this protein is 3-hydroxyacyl-[acyl-carrier-protein] dehydratase FabZ.